We begin with the raw amino-acid sequence, 552 residues long: ATP synthase subunit alpha (552 aa).

Gly173 to Ser180 provides a ligand contact to ATP. Residues Lys509–Gly552 are disordered.

This sequence belongs to the ATPase alpha/beta chains family. F-type ATPases have 2 components, CF(1) - the catalytic core - and CF(0) - the membrane proton channel. CF(1) has five subunits: alpha(3), beta(3), gamma(1), delta(1), epsilon(1). CF(0) has three main subunits: a(1), b(2) and c(9-12). The alpha and beta chains form an alternating ring which encloses part of the gamma chain. CF(1) is attached to CF(0) by a central stalk formed by the gamma and epsilon chains, while a peripheral stalk is formed by the delta and b chains.

The protein resides in the cell membrane. The catalysed reaction is ATP + H2O + 4 H(+)(in) = ADP + phosphate + 5 H(+)(out). Produces ATP from ADP in the presence of a proton gradient across the membrane. The alpha chain is a regulatory subunit. The sequence is that of ATP synthase subunit alpha from Kineococcus radiotolerans (strain ATCC BAA-149 / DSM 14245 / SRS30216).